Here is a 413-residue protein sequence, read N- to C-terminus: 1-deoxy-D-xylulose 5-phosphate reductoisomerase (413 aa).

Positions 13, 14, 15, 16, 40, 41, and 127 each coordinate NADPH. Residue lysine 128 participates in 1-deoxy-D-xylulose 5-phosphate binding. Residue glutamate 129 participates in NADPH binding. Residue aspartate 153 participates in Mn(2+) binding. 1-deoxy-D-xylulose 5-phosphate-binding residues include serine 154, glutamate 155, serine 184, and histidine 207. Mn(2+) is bound at residue glutamate 155. Residue glycine 213 coordinates NADPH. 1-deoxy-D-xylulose 5-phosphate-binding residues include serine 220, asparagine 225, lysine 226, and glutamate 229. Glutamate 229 is a binding site for Mn(2+).

The protein belongs to the DXR family. Mg(2+) serves as cofactor. It depends on Mn(2+) as a cofactor.

It carries out the reaction 2-C-methyl-D-erythritol 4-phosphate + NADP(+) = 1-deoxy-D-xylulose 5-phosphate + NADPH + H(+). It functions in the pathway isoprenoid biosynthesis; isopentenyl diphosphate biosynthesis via DXP pathway; isopentenyl diphosphate from 1-deoxy-D-xylulose 5-phosphate: step 1/6. Catalyzes the NADPH-dependent rearrangement and reduction of 1-deoxy-D-xylulose-5-phosphate (DXP) to 2-C-methyl-D-erythritol 4-phosphate (MEP). The polypeptide is 1-deoxy-D-xylulose 5-phosphate reductoisomerase (Nitrosomonas eutropha (strain DSM 101675 / C91 / Nm57)).